Consider the following 152-residue polypeptide: Keratin, high-sulfur matrix protein, B2C (152 aa).

A2 is subject to N-acetylalanine. 3 repeats span residues 27 to 36, 37 to 46, and 47 to 56; these read STCSQTSCCQ, PTSIQTSCCQ, and PTCLQTSGCE.

Its function is as follows. The keratin products of mammalian epidermal derivatives such as wool and hair consist of microfibrils embedded in a rigid matrix of other proteins. The matrix proteins include the high-sulfur and high-tyrosine keratins, having molecular weights of 6-20 kDa, whereas the microfibrils contain the larger, low-sulfur keratins (40-56 kDa). The protein is Keratin, high-sulfur matrix protein, B2C of Ovis aries (Sheep).